Here is a 227-residue protein sequence, read N- to C-terminus: Cytochrome c oxidase subunit 2 (227 aa).

At 1-14 (MAHAVQYGFQDAAA) the chain is on the mitochondrial intermembrane side. A helical membrane pass occupies residues 15 to 45 (PIMEELLYFHDHTLMIVFMISSLVLYIISLM). Over 46–59 (LSTELTHTSTMDAQ) the chain is Mitochondrial matrix. Residues 60–87 (EVETVWTILPAVILILIALPSLRILYMM) form a helical membrane-spanning segment. Residues 88 to 227 (DEIETPSLTL…YFEEWLLKTL (140 aa)) are Mitochondrial intermembrane-facing. Cu cation is bound by residues H161, C196, E198, C200, H204, and M207. Residue E198 participates in Mg(2+) binding. Y218 is subject to Phosphotyrosine.

It belongs to the cytochrome c oxidase subunit 2 family. In terms of assembly, component of the cytochrome c oxidase (complex IV, CIV), a multisubunit enzyme composed of 14 subunits. The complex is composed of a catalytic core of 3 subunits MT-CO1, MT-CO2 and MT-CO3, encoded in the mitochondrial DNA, and 11 supernumerary subunits COX4I, COX5A, COX5B, COX6A, COX6B, COX6C, COX7A, COX7B, COX7C, COX8 and NDUFA4, which are encoded in the nuclear genome. The complex exists as a monomer or a dimer and forms supercomplexes (SCs) in the inner mitochondrial membrane with NADH-ubiquinone oxidoreductase (complex I, CI) and ubiquinol-cytochrome c oxidoreductase (cytochrome b-c1 complex, complex III, CIII), resulting in different assemblies (supercomplex SCI(1)III(2)IV(1) and megacomplex MCI(2)III(2)IV(2)). Found in a complex with TMEM177, COA6, COX18, COX20, SCO1 and SCO2. Interacts with TMEM177 in a COX20-dependent manner. Interacts with COX20. Interacts with COX16. The cofactor is Cu cation.

The protein localises to the mitochondrion inner membrane. It carries out the reaction 4 Fe(II)-[cytochrome c] + O2 + 8 H(+)(in) = 4 Fe(III)-[cytochrome c] + 2 H2O + 4 H(+)(out). Component of the cytochrome c oxidase, the last enzyme in the mitochondrial electron transport chain which drives oxidative phosphorylation. The respiratory chain contains 3 multisubunit complexes succinate dehydrogenase (complex II, CII), ubiquinol-cytochrome c oxidoreductase (cytochrome b-c1 complex, complex III, CIII) and cytochrome c oxidase (complex IV, CIV), that cooperate to transfer electrons derived from NADH and succinate to molecular oxygen, creating an electrochemical gradient over the inner membrane that drives transmembrane transport and the ATP synthase. Cytochrome c oxidase is the component of the respiratory chain that catalyzes the reduction of oxygen to water. Electrons originating from reduced cytochrome c in the intermembrane space (IMS) are transferred via the dinuclear copper A center (CU(A)) of subunit 2 and heme A of subunit 1 to the active site in subunit 1, a binuclear center (BNC) formed by heme A3 and copper B (CU(B)). The BNC reduces molecular oxygen to 2 water molecules using 4 electrons from cytochrome c in the IMS and 4 protons from the mitochondrial matrix. The protein is Cytochrome c oxidase subunit 2 (MT-CO2) of Galago senegalensis (Northern lesser bushbaby).